The chain runs to 458 residues: Dihydrolipoyl dehydrogenase (458 aa).

Residues Asp30–Cys38, Lys47, and Ala112 each bind FAD. Residues Cys38 and Cys43 are joined by a disulfide bond. Residues Gly177–Ile181, Glu200, and Ala263–Arg266 contribute to the NAD(+) site. Positions 305 and 313 each coordinate FAD. His437 functions as the Proton acceptor in the catalytic mechanism.

This sequence belongs to the class-I pyridine nucleotide-disulfide oxidoreductase family. In terms of assembly, homodimer. It depends on FAD as a cofactor.

The protein resides in the cytoplasm. It catalyses the reaction N(6)-[(R)-dihydrolipoyl]-L-lysyl-[protein] + NAD(+) = N(6)-[(R)-lipoyl]-L-lysyl-[protein] + NADH + H(+). It functions in the pathway ketone degradation; acetoin degradation. The polypeptide is Dihydrolipoyl dehydrogenase (acoL) (Bacillus subtilis (strain 168)).